A 225-amino-acid polypeptide reads, in one-letter code: Chalcone--flavanone isomerase 3 (225 aa).

Substrate is bound by residues Thr51, Asn116, and Thr193.

The protein belongs to the chalcone isomerase family.

The catalysed reaction is a chalcone = a flavanone.. It participates in secondary metabolite biosynthesis; flavonoid biosynthesis. In terms of biological role, catalyzes the intramolecular cyclization of bicyclic chalcones into tricyclic (S)-flavanones. Responsible for the isomerization of 4,2',4',6'-tetrahydroxychalcone (also termed chalcone) into naringenin. The polypeptide is Chalcone--flavanone isomerase 3 (CHI3) (Lotus japonicus (Lotus corniculatus var. japonicus)).